Here is a 163-residue protein sequence, read N- to C-terminus: tRNA-acetylating toxin 2 (163 aa).

Residues Leu89, Val91, His96, Gly97, Gln98, Gly99, Ala101, Arg102, and Glu132 each contribute to the acetyl-CoA site. The active site involves Tyr137. Residue Arg139 coordinates acetyl-CoA.

It belongs to the acetyltransferase family. GNAT subfamily. In terms of assembly, homodimer (in absence of antitoxin). Forms a complex with cognate antitoxin TacA2. Forms a 4:2 antitoxin:toxin complex with cognate antitoxin TacA2.

It carries out the reaction glycyl-tRNA(Gly) + acetyl-CoA = N-acetylglycyl-tRNA(Gly) + CoA + H(+). Its function is as follows. Toxic component of a type II toxin-antitoxin (TA) system. Acetylates tRNA and inhibits translation. Acetylates exclusively Gly in situ. Overexpression during the lag phase of a tacA2-tacT2 deletion strain leads to very small increase in persister cells in the presence of cefotaxime but no detectable growth phenotype in absence of antibiotics. Compared to a protein with a single amino acid change (TacT2 from S.enterica NCTC 13349, Glu-29 is Lys in NCTC 13349) this protein binds tRNA very poorly and acetylates tRNA very poorly. Persister cell formation is neutralized by cognate antitoxin TacA2. Neutralized only by cognate antitoxin TacA2 (A8), but not by TacA1 or TacA3. Plays a role in persister cell formation. Functionally, the TacA2-TacT2 complex both represses and derepresses expression of its own operon. This Salmonella typhimurium (strain 14028s / SGSC 2262) protein is tRNA-acetylating toxin 2.